A 48-amino-acid polypeptide reads, in one-letter code: uncharacterized protein (48 aa).

The protein belongs to the ELIP/psbS family.

Its subcellular location is the plastid. It localises to the chloroplast. In terms of biological role, possible role in chlorophyll and/or carotenoid binding. This is an uncharacterized protein from Porphyra purpurea (Red seaweed).